Reading from the N-terminus, the 157-residue chain is MRIGIGIDIHQLVEGRKLIIGGVEIPYEKGLKGHSDADVLLHAISDALLGAAALGDIGKHFPDTDPAYKGIDSQLLLKHVRKLLETHGYKPVNVDSMLLLEKPKIAPHVQKMRENIAACLEVDVDAISVKATTNEKIGYVGRGEGALAHAVCLIEKI.

A divalent metal cation is bound by residues Asp-8 and His-10. Residues 8 to 10 (DIH) and 34 to 35 (HS) contribute to the 4-CDP-2-C-methyl-D-erythritol 2-phosphate site. His-42 contributes to the a divalent metal cation binding site. 4-CDP-2-C-methyl-D-erythritol 2-phosphate-binding positions include 56–58 (DIG), 61–65 (FPDTD), 132–135 (TTNE), and Arg-142.

Belongs to the IspF family. As to quaternary structure, homotrimer. The cofactor is a divalent metal cation.

It catalyses the reaction 4-CDP-2-C-methyl-D-erythritol 2-phosphate = 2-C-methyl-D-erythritol 2,4-cyclic diphosphate + CMP. The protein operates within isoprenoid biosynthesis; isopentenyl diphosphate biosynthesis via DXP pathway; isopentenyl diphosphate from 1-deoxy-D-xylulose 5-phosphate: step 4/6. Functionally, involved in the biosynthesis of isopentenyl diphosphate (IPP) and dimethylallyl diphosphate (DMAPP), two major building blocks of isoprenoid compounds. Catalyzes the conversion of 4-diphosphocytidyl-2-C-methyl-D-erythritol 2-phosphate (CDP-ME2P) to 2-C-methyl-D-erythritol 2,4-cyclodiphosphate (ME-CPP) with a corresponding release of cytidine 5-monophosphate (CMP). This is 2-C-methyl-D-erythritol 2,4-cyclodiphosphate synthase from Chloroherpeton thalassium (strain ATCC 35110 / GB-78).